A 164-amino-acid polypeptide reads, in one-letter code: C-phycoerythrin alpha chain (164 aa).

Positions 82 and 139 each coordinate (2R,3E)-phycoerythrobilin.

Belongs to the phycobiliprotein family. Heterodimer of an alpha and a beta chain. Contains two covalently linked bilin chromophores.

It is found in the cellular thylakoid membrane. Its function is as follows. Light-harvesting photosynthetic bile pigment-protein from the phycobiliprotein complex. The protein is C-phycoerythrin alpha chain (cpeA) of Pseudanabaena tenuis (strain PCC 7409).